A 745-amino-acid chain; its full sequence is Polyribonucleotide nucleotidyltransferase (745 aa).

2 residues coordinate Mg(2+): aspartate 487 and aspartate 493. A KH domain is found at 554–613 (PRIETMQIPTDKIRDVIGTGGKIIREIVEKTGAKINIEDTGVVKIASSDGKAIKAAYNWI). Residues 623 to 691 (GTIYDGTIVK…ERGKIRLSMK (69 aa)) enclose the S1 motif domain. Residues 695 to 745 (QETGEDITEKLKAERAERGEPEREERSDRGDRGDRGPRRDRGERRRESSGE) are disordered. The span at 701–745 (ITEKLKAERAERGEPEREERSDRGDRGDRGPRRDRGERRRESSGE) shows a compositional bias: basic and acidic residues.

The protein belongs to the polyribonucleotide nucleotidyltransferase family. The cofactor is Mg(2+).

Its subcellular location is the cytoplasm. It catalyses the reaction RNA(n+1) + phosphate = RNA(n) + a ribonucleoside 5'-diphosphate. Its function is as follows. Involved in mRNA degradation. Catalyzes the phosphorolysis of single-stranded polyribonucleotides processively in the 3'- to 5'-direction. This chain is Polyribonucleotide nucleotidyltransferase, found in Methylorubrum populi (strain ATCC BAA-705 / NCIMB 13946 / BJ001) (Methylobacterium populi).